Here is a 33-residue protein sequence, read N- to C-terminus: GLFDVVKGVLKGVGKNVAGSLLEQLKCKLSGGC.

A disulfide bridge links cysteine 27 with cysteine 33.

In terms of tissue distribution, expressed by the skin glands.

It is found in the secreted. Antimicrobial peptide. A mixture of Brevinin-2DYc/2DYd is active against the Gram-positive bacterium S.aureus (MIC=15 uM) and the Gram-negative bacterium E.coli (MIC=15 uM). The polypeptide is Brevinin-2DYc (Rana dybowskii (Dybovsky's frog)).